A 432-amino-acid polypeptide reads, in one-letter code: Homogentisate 1,2-dioxygenase (432 aa).

The Proton acceptor role is filled by H287. Residues H330 and E336 each contribute to the Fe cation site. Positions 345 and 366 each coordinate homogentisate. H366 lines the Fe cation pocket.

This sequence belongs to the homogentisate dioxygenase family. In terms of assembly, hexamer; dimer of trimers. The cofactor is Fe cation.

The enzyme catalyses homogentisate + O2 = 4-maleylacetoacetate + H(+). It functions in the pathway amino-acid degradation; L-phenylalanine degradation; acetoacetate and fumarate from L-phenylalanine: step 4/6. Its function is as follows. Involved in the catabolism of homogentisate (2,5-dihydroxyphenylacetate or 2,5-OH-PhAc), a central intermediate in the degradation of phenylalanine and tyrosine. Catalyzes the oxidative ring cleavage of the aromatic ring of homogentisate to yield maleylacetoacetate. This chain is Homogentisate 1,2-dioxygenase, found in Pseudomonas aeruginosa (strain UCBPP-PA14).